The following is an 88-amino-acid chain: Cuticle protein 70, isoforms A and B (88 aa).

Tandem repeats lie at residues Ala7 to Ala10, Ala48 to Ala51, Ala55 to Pro58, Ala60 to Val63, and Ala66 to Val69.

Component of the cuticle of migratory locust which contains more than 100 different structural proteins. The sequence is that of Cuticle protein 70, isoforms A and B from Locusta migratoria (Migratory locust).